The sequence spans 526 residues: Medium/long-chain-fatty-acid--[acyl-carrier-protein] ligase MbtM (526 aa).

Residues lysine 260 and lysine 511 each carry the N6-acetyllysine; by Pat modification.

The protein belongs to the ATP-dependent AMP-binding enzyme family. In terms of processing, acetylated on Lys-511 and Lys-260 by Pat. Lys-511 is the major acetylation site. Acetylation results in the inactivation of the enzyme.

It carries out the reaction a long-chain fatty acid + holo-[ACP] + ATP = a long-chain fatty acyl-[ACP] + AMP + diphosphate. It catalyses the reaction a medium-chain fatty acid + holo-[ACP] + ATP = a medium-chain fatty acyl-[ACP] + AMP + diphosphate. The enzyme catalyses hexadecanoate + holo-[ACP] + ATP = hexadecanoyl-[ACP] + AMP + diphosphate. The catalysed reaction is hexadecanoate + ATP + H(+) = hexadecanoyl-AMP + diphosphate. It carries out the reaction hexadecanoyl-AMP + holo-[ACP] = hexadecanoyl-[ACP] + AMP + H(+). It catalyses the reaction dodecanoate + holo-[ACP] + ATP = dodecanoyl-[ACP] + AMP + diphosphate. The enzyme catalyses dodecanoate + ATP + H(+) = dodecanoyl-AMP + diphosphate. The catalysed reaction is dodecanoyl-AMP + holo-[ACP] = dodecanoyl-[ACP] + AMP + H(+). It functions in the pathway siderophore biosynthesis; mycobactin biosynthesis. With respect to regulation, reversibly inactivated by post-translational acetylation by Pat in a cAMP-dependent manner and reactivated by Sir2 deacylase. Activates lipidic moieties required for mycobactin biosynthesis. Converts medium- to long-chain aliphatic fatty acids into acyl adenylate, which is further transferred on to the phosphopantetheine arm of the carrier protein MbtL. Shows a strong preference for palmitic acid (C16) and cannot use short-chain fatty acids. Proceeds via a Bi Uni Uni Bi ping-pong mechanism. During the first half-reaction (adenylation), fatty acid binds first to the free enzyme, followed by ATP and the release of pyrophosphate to form the adenylate intermediate. During the second half-reaction (ligation), holo-MbtL binds to the enzyme followed by the release of products AMP and acylated MbtL. The polypeptide is Medium/long-chain-fatty-acid--[acyl-carrier-protein] ligase MbtM (Mycolicibacterium smegmatis (strain ATCC 700084 / mc(2)155) (Mycobacterium smegmatis)).